The sequence spans 368 residues: Cytochrome-c peroxidase IdrP2 (368 aa).

Residues 1-27 (MKWHRGRLTQTLGAMGLTATLTVAAQA) form the signal peptide. Cytochrome c domains follow at residues 48–158 (AMIE…ALWQ) and 201–346 (KEAQ…LTLS). Residues C70, C73, H74, C216, C219, and H220 each contribute to the heme c site.

The iodate reductase (Idr) complex is composed of a molybdopterin-dependent iodate reductase (IdrA and IdrB subunits) and two associated peroxidases (IdrP1 and IdrP2). Heme c is required as a cofactor.

The protein resides in the periplasm. The catalysed reaction is 2 Fe(II)-[cytochrome c] + H2O2 + 2 H(+) = 2 Fe(III)-[cytochrome c] + 2 H2O. Functionally, involved in iodate respiration. Probably reduces the H(2)O(2) produced by IdrA/IdrB to H(2)O, using a reduced cytochrome c as the electron donor. The sequence is that of Cytochrome-c peroxidase IdrP2 from Pseudomonas sp. (strain SCT).